We begin with the raw amino-acid sequence, 109 residues long: Putative small proline-rich protein 2J (109 aa).

5 tandem repeats follow at residues 21–29 (RSAQSPVLC), 30–38 (QSAPSLVLL), 39–47 (QSAQSPIHC), 48–56 (QSALSHAHL), and 57–65 (SHASRNALL). The segment at 21 to 65 (RSAQSPVLCQSAPSLVLLQSAQSPIHCQSALSHAHLSHASRNALL) is 5 X 9 AA approximate tandem repeats. The interval 76-109 (AHPRANKGFSSLQNQKKRTESILHKSIATPPSSI) is disordered.

Belongs to the cornifin (SPRR) family. As to expression, not expressed in uterus.

The protein localises to the cytoplasm. In terms of biological role, cross-linked envelope protein of keratinocytes. It is a keratinocyte protein that first appears in the cell cytosol, but ultimately becomes cross-linked to membrane proteins by transglutaminase. All that results in the formation of an insoluble envelope beneath the plasma membrane. The chain is Putative small proline-rich protein 2J (Sprr2j) from Mus musculus (Mouse).